The sequence spans 529 residues: NADPH-dependent thioredoxin reductase 3 (529 aa).

The transit peptide at 1–67 (MAASPKIGIG…SSDSLRLRVS (67 aa)) directs the protein to the chloroplast. The disordered stretch occupies residues 54 to 78 (TRTRSSDSLRLRVSATANSPSSSSS). Residues 64–78 (LRVSATANSPSSSSS) show a composition bias toward low complexity. Residues 91–94 (SGPA), 113–120 (EGYQMGGV), Asn-133, Val-166, and Cys-220 each bind FAD. Cysteines 217 and 220 form a disulfide. NADP(+) contacts are provided by Thr-240, Arg-265, Ile-324, and Tyr-344. FAD contacts are provided by residues Asp-364 and 371–374 (RQAV). Position 371 (Arg-371) interacts with NADP(+). The 127-residue stretch at 403-529 (PQTEEAKKEF…EYREFIEANK (127 aa)) folds into the Thioredoxin domain. Catalysis depends on nucleophile residues Cys-454 and Cys-457. A disulfide bond links Cys-454 and Cys-457.

The protein belongs to the class-II pyridine nucleotide-disulfide oxidoreductase family. May homodimerize. Interacts with the 2-Cys peroxiredoxin BAS1. FAD is required as a cofactor.

The protein resides in the plastid. The protein localises to the chloroplast. The catalysed reaction is [thioredoxin]-dithiol + NADP(+) = [thioredoxin]-disulfide + NADPH + H(+). In terms of biological role, thioredoxin reductase (TR) that exhibits both TR and thioredoxin (Trx) activities. Contains a C-terminal functional Trx domain. Functions as an electron donor for plastidial 2-Cys peroxiredoxins and participates in a NADPH-dependent hydrogen peroxide scavenging system in chloroplasts in the dark. Required for chlorophyll biosynthesis and biogenesis of the photosynthetic apparatus. Activates aerobic cyclase which converts Mg-protoporhyrin monomethyl ester into protochlorophyllide. Involved in a light-dependent regulation of starch biosynthesis by redox activation of the ADP-glucose pyrophosphorylase (AGPase), a central enzyme of starch synthesis. This chain is NADPH-dependent thioredoxin reductase 3, found in Arabidopsis thaliana (Mouse-ear cress).